Reading from the N-terminus, the 312-residue chain is Aspartate carbamoyltransferase catalytic subunit (312 aa).

Positions 55 and 56 each coordinate carbamoyl phosphate. K83 provides a ligand contact to L-aspartate. Carbamoyl phosphate-binding residues include R105, H138, and Q141. L-aspartate contacts are provided by R171 and R225. The carbamoyl phosphate site is built by G266 and P267.

This sequence belongs to the aspartate/ornithine carbamoyltransferase superfamily. ATCase family. Heterododecamer (2C3:3R2) of six catalytic PyrB chains organized as two trimers (C3), and six regulatory PyrI chains organized as three dimers (R2).

It catalyses the reaction carbamoyl phosphate + L-aspartate = N-carbamoyl-L-aspartate + phosphate + H(+). Its pathway is pyrimidine metabolism; UMP biosynthesis via de novo pathway; (S)-dihydroorotate from bicarbonate: step 2/3. In terms of biological role, catalyzes the condensation of carbamoyl phosphate and aspartate to form carbamoyl aspartate and inorganic phosphate, the committed step in the de novo pyrimidine nucleotide biosynthesis pathway. The sequence is that of Aspartate carbamoyltransferase catalytic subunit from Corynebacterium glutamicum (strain R).